Here is a 149-residue protein sequence, read N- to C-terminus: CCAAT/enhancer-binding protein gamma (149 aa).

Over residues 1-12 (MSKVSQQNSTPG) the composition is skewed to polar residues. The segment at 1-92 (MSKVSQQNST…SKQKAQDTLQ (92 aa)) is disordered. A Glycyl lysine isopeptide (Lys-Gly) (interchain with G-Cter in SUMO2) cross-link involves residue lysine 3. Residues 28–37 (LQQVPQLVPA) show a composition bias toward low complexity. Basic and acidic residues predominate over residues 56–72 (SPMDRNSDEYRQRRERN). Residues 62–125 (SDEYRQRRER…SVLKDLFLEH (64 aa)) form the bZIP domain. The segment at 66 to 93 (RQRRERNNMAVKKSRLKSKQKAQDTLQR) is basic motif. The interval 97–118 (LKEENERLEAKIKLLTKELSVL) is leucine-zipper. The segment at 128-149 (NLADNVQPSSTENTTNPDKAGQ) is disordered. Polar residues predominate over residues 131-149 (DNVQPSSTENTTNPDKAGQ).

This sequence belongs to the bZIP family. C/EBP subfamily. As to quaternary structure, binds DNA as a dimer and can form stable heterodimers with CEBPA and CEBPB. Interacts with ZNF638; this interaction increases transcriptional activation.

It localises to the nucleus. Functionally, transcription factor that binds to the promoter and the enhancer regions of target genes. Binds to the enhancer element PRE-I (positive regulatory element-I) of the IL-4 gene. Binds to the promoter and the enhancer of the immunoglobulin heavy chain. Binds to GPE1, a cis-acting element in the G-CSF gene promoter. This is CCAAT/enhancer-binding protein gamma (CEBPG) from Bos taurus (Bovine).